A 493-amino-acid polypeptide reads, in one-letter code: Glutamyl-tRNA(Gln) amidotransferase subunit A (493 aa).

Active-site charge relay system residues include Lys-78 and Ser-158. Ser-182 (acyl-ester intermediate) is an active-site residue.

The protein belongs to the amidase family. GatA subfamily. Heterotrimer of A, B and C subunits.

It carries out the reaction L-glutamyl-tRNA(Gln) + L-glutamine + ATP + H2O = L-glutaminyl-tRNA(Gln) + L-glutamate + ADP + phosphate + H(+). Its function is as follows. Allows the formation of correctly charged Gln-tRNA(Gln) through the transamidation of misacylated Glu-tRNA(Gln) in organisms which lack glutaminyl-tRNA synthetase. The reaction takes place in the presence of glutamine and ATP through an activated gamma-phospho-Glu-tRNA(Gln). The protein is Glutamyl-tRNA(Gln) amidotransferase subunit A of Azorhizobium caulinodans (strain ATCC 43989 / DSM 5975 / JCM 20966 / LMG 6465 / NBRC 14845 / NCIMB 13405 / ORS 571).